Here is a 118-residue protein sequence, read N- to C-terminus: V-type proton ATPase subunit G 1 (118 aa).

Position 2 is an N-acetylalanine (Ala2). Residues 19–42 (AEKVSEARKRKNRRLKQAKEEAQA) are disordered.

Belongs to the V-ATPase G subunit family. V-ATPase is a heteromultimeric enzyme made up of two complexes: the ATP-hydrolytic V1 complex and the proton translocation V0 complex. The V1 complex consists of three catalytic AB heterodimers that form a heterohexamer, three peripheral stalks each consisting of EG heterodimers, one central rotor including subunits D and F, and the regulatory subunits C and H. The proton translocation complex V0 consists of the proton transport subunit a, a ring of proteolipid subunits c9c'', rotary subunit d, subunits e and f, and the accessory subunits ATP6AP1/Ac45 and ATP6AP2/PRR. As to expression, brain, heart, kidney and spleen.

It is found in the apical cell membrane. Subunit of the V1 complex of vacuolar(H+)-ATPase (V-ATPase), a multisubunit enzyme composed of a peripheral complex (V1) that hydrolyzes ATP and a membrane integral complex (V0) that translocates protons. V-ATPase is responsible for acidifying and maintaining the pH of intracellular compartments and in some cell types, is targeted to the plasma membrane, where it is responsible for acidifying the extracellular environment. In aerobic conditions, involved in intracellular iron homeostasis, thus triggering the activity of Fe(2+) prolyl hydroxylase (PHD) enzymes, and leading to HIF1A hydroxylation and subsequent proteasomal degradation. The protein is V-type proton ATPase subunit G 1 (ATP6V1G1) of Bos taurus (Bovine).